The chain runs to 375 residues: Probable pectin lyase D (375 aa).

The first 19 residues, 1 to 19 (MKYAAVLTTVAALASRALG), serve as a signal peptide directing secretion. Cystine bridges form between cysteine 82/cysteine 101 and cysteine 91/cysteine 225. The N-linked (GlcNAc...) asparagine glycan is linked to asparagine 128. Arginine 255 is an active-site residue. Cysteine 321 and cysteine 329 are oxidised to a cystine.

The protein belongs to the polysaccharide lyase 1 family.

Its subcellular location is the secreted. It catalyses the reaction Eliminative cleavage of (1-&gt;4)-alpha-D-galacturonan methyl ester to give oligosaccharides with 4-deoxy-6-O-methyl-alpha-D-galact-4-enuronosyl groups at their non-reducing ends.. Pectinolytic enzymes consist of four classes of enzymes: pectin lyase, polygalacturonase, pectin methylesterase and rhamnogalacturonase. Among pectinolytic enzymes, pectin lyase is the most important in depolymerization of pectin, since it cleaves internal glycosidic bonds of highly methylated pectins. The polypeptide is Probable pectin lyase D (pelD) (Aspergillus flavus (strain ATCC 200026 / FGSC A1120 / IAM 13836 / NRRL 3357 / JCM 12722 / SRRC 167)).